Consider the following 340-residue polypeptide: UDP-N-acetylenolpyruvoylglucosamine reductase (340 aa).

The region spanning 11 to 181 (ISVKAKKIIS…VAIGLKLKKK (171 aa)) is the FAD-binding PCMH-type domain. Arginine 156 is a catalytic residue. Catalysis depends on serine 227, which acts as the Proton donor. Glutamate 323 is an active-site residue.

This sequence belongs to the MurB family. The cofactor is FAD.

Its subcellular location is the cytoplasm. The catalysed reaction is UDP-N-acetyl-alpha-D-muramate + NADP(+) = UDP-N-acetyl-3-O-(1-carboxyvinyl)-alpha-D-glucosamine + NADPH + H(+). It participates in cell wall biogenesis; peptidoglycan biosynthesis. Its function is as follows. Cell wall formation. In Wigglesworthia glossinidia brevipalpis, this protein is UDP-N-acetylenolpyruvoylglucosamine reductase.